Reading from the N-terminus, the 257-residue chain is Protein orai-2 (257 aa).

4 helical membrane-spanning segments follow: residues 67–84, 95–115, 149–169, and 199–219; these read TSAL…EVQL, LIAF…ALLI, LAWG…VVLL, and AALV…VFTI.

It belongs to the Orai family.

Its subcellular location is the membrane. Functionally, ca(2+) release-activated Ca(2+)-like (CRAC-like) channel subunit which mediates Ca(2+) influx and increase in Ca(2+)-selective current by synergy with the Ca(2+) sensor, STIM1. The polypeptide is Protein orai-2 (ORAI2) (Gallus gallus (Chicken)).